Reading from the N-terminus, the 578-residue chain is Isocitrate dehydrogenase kinase/phosphatase (578 aa).

ATP is bound by residues 315–321 (APGIRGM) and Lys-336. Residue Asp-371 is part of the active site.

Belongs to the AceK family.

The protein resides in the cytoplasm. It catalyses the reaction L-seryl-[isocitrate dehydrogenase] + ATP = O-phospho-L-seryl-[isocitrate dehydrogenase] + ADP + H(+). In terms of biological role, bifunctional enzyme which can phosphorylate or dephosphorylate isocitrate dehydrogenase (IDH) on a specific serine residue. This is a regulatory mechanism which enables bacteria to bypass the Krebs cycle via the glyoxylate shunt in response to the source of carbon. When bacteria are grown on glucose, IDH is fully active and unphosphorylated, but when grown on acetate or ethanol, the activity of IDH declines drastically concomitant with its phosphorylation. The sequence is that of Isocitrate dehydrogenase kinase/phosphatase from Shigella dysenteriae serotype 1 (strain Sd197).